We begin with the raw amino-acid sequence, 333 residues long: 4-hydroxy-3-methylbut-2-enyl diphosphate reductase (333 aa).

Cysteine 20 is a [4Fe-4S] cluster binding site. The (2E)-4-hydroxy-3-methylbut-2-enyl diphosphate site is built by histidine 49 and histidine 85. Histidine 49 and histidine 85 together coordinate dimethylallyl diphosphate. Isopentenyl diphosphate is bound by residues histidine 49 and histidine 85. [4Fe-4S] cluster is bound at residue cysteine 107. (2E)-4-hydroxy-3-methylbut-2-enyl diphosphate is bound at residue histidine 135. Histidine 135 is a binding site for dimethylallyl diphosphate. An isopentenyl diphosphate-binding site is contributed by histidine 135. Catalysis depends on glutamate 137, which acts as the Proton donor. A (2E)-4-hydroxy-3-methylbut-2-enyl diphosphate-binding site is contributed by threonine 176. [4Fe-4S] cluster is bound at residue cysteine 206. (2E)-4-hydroxy-3-methylbut-2-enyl diphosphate-binding residues include serine 234, serine 235, asparagine 236, and serine 279. Dimethylallyl diphosphate-binding residues include serine 234, serine 235, asparagine 236, and serine 279. 4 residues coordinate isopentenyl diphosphate: serine 234, serine 235, asparagine 236, and serine 279.

It belongs to the IspH family. Requires [4Fe-4S] cluster as cofactor.

The catalysed reaction is isopentenyl diphosphate + 2 oxidized [2Fe-2S]-[ferredoxin] + H2O = (2E)-4-hydroxy-3-methylbut-2-enyl diphosphate + 2 reduced [2Fe-2S]-[ferredoxin] + 2 H(+). The enzyme catalyses dimethylallyl diphosphate + 2 oxidized [2Fe-2S]-[ferredoxin] + H2O = (2E)-4-hydroxy-3-methylbut-2-enyl diphosphate + 2 reduced [2Fe-2S]-[ferredoxin] + 2 H(+). It participates in isoprenoid biosynthesis; dimethylallyl diphosphate biosynthesis; dimethylallyl diphosphate from (2E)-4-hydroxy-3-methylbutenyl diphosphate: step 1/1. The protein operates within isoprenoid biosynthesis; isopentenyl diphosphate biosynthesis via DXP pathway; isopentenyl diphosphate from 1-deoxy-D-xylulose 5-phosphate: step 6/6. Its function is as follows. Catalyzes the conversion of 1-hydroxy-2-methyl-2-(E)-butenyl 4-diphosphate (HMBPP) into a mixture of isopentenyl diphosphate (IPP) and dimethylallyl diphosphate (DMAPP). Acts in the terminal step of the DOXP/MEP pathway for isoprenoid precursor biosynthesis. The sequence is that of 4-hydroxy-3-methylbut-2-enyl diphosphate reductase from Rhizobium johnstonii (strain DSM 114642 / LMG 32736 / 3841) (Rhizobium leguminosarum bv. viciae).